We begin with the raw amino-acid sequence, 634 residues long: TATA box-binding protein-associated factor RNA polymerase I subunit B (634 aa).

The RRN7-type zinc finger occupies 19–51; the sequence is LVCEYCGHGSEYAEDDADDGFFTCRQCSAIHTS. Positions 21, 24, 42, and 45 each coordinate Zn(2+). Residues 51 to 80 are B-reader; that stretch reads STQNTATNPFDFPMTPAHLSAHRRPTQPTP. The disordered stretch occupies residues 54-107; the sequence is NTATNPFDFPMTPAHLSAHRRPTQPTPTPKPFPAPRGAATGAAAPDFDDLGEPS. Residues 77–87 are compositionally biased toward pro residues; sequence QPTPTPKPFPA. Residues 81–83 are B-linker; the sequence is TPK. Residues 84–281 form an N-terminal cyclin fold region; that stretch reads PFPAPRGAAT…DKLLGSSLND (198 aa). Low complexity predominate over residues 88 to 98; it reads PRGAATGAAAP. The C-terminal cyclin fold stretch occupies residues 282-284; sequence CPL.

The protein belongs to the RRN7/TAF1B family.

The protein localises to the nucleus. It localises to the nucleolus. In terms of biological role, component of RNA polymerase I core factor complex that acts as a GTF2B/TFIIB-like factor and plays a key role in multiple steps during transcription initiation such as pre-initiation complex (PIC) assembly and postpolymerase recruitment events in polymerase I (Pol I) transcription. Binds rDNA promoters and plays a role in Pol I recruitment. This is TATA box-binding protein-associated factor RNA polymerase I subunit B from Oryza sativa subsp. japonica (Rice).